The following is a 268-amino-acid chain: Proenkephalin-A (268 aa).

The first 24 residues, 1–24 (MARFLRLCTWLLVLGSCLLATVQA), serve as a signal peptide directing secretion. 3 disulfide bridges follow: Cys-26-Cys-48, Cys-30-Cys-52, and Cys-33-Cys-65. The segment at 162-185 (GTGDNRAREGRHQESTDNDDNMSK) is disordered. Residues 166–176 (NRAREGRHQES) show a composition bias toward basic and acidic residues. Propeptides lie at residues 197–208 (SPQVEDEAKELQ) and 218–228 (VGRPEWWMDYQ). Position 252 is a phosphoserine (Ser-252).

The protein belongs to the opioid neuropeptide precursor family. Post-translationally, proenkephalin-A is cleaved by CTSL to generate Met-enkephalin. In terms of processing, processed and degraded by ACE. Probably cleaved by ACE. Post-translationally, processed by ACE to generate Met-enkephalin in the nucleus accumbens of the brain. In terms of processing, the N-terminal domain contains 6 conserved cysteines thought to be involved in disulfide bonding and/or processing.

The protein resides in the cytoplasmic vesicle. Its subcellular location is the secretory vesicle. It localises to the chromaffin granule lumen. It is found in the secreted. Its function is as follows. Neuropeptide that competes with and mimic the effects of opiate drugs. They play a role in a number of physiologic functions, including pain perception and responses to stress. In terms of biological role, met-enkephalin-Arg-Phe neuropeptide acts as a strong ligand of Mu-type opioid receptor OPRM1. Met-enkephalin-Arg-Phe-binding to OPRM1 in the nucleus accumbens of the brain increases activation of OPRM1, leading to long-term synaptic depression of glutamate release. Increases glutamate release in the striatum and decreases GABA concentration in the striatum. Functionally, increases glutamate release in the striatum. The protein is Proenkephalin-A (PENK) of Mesocricetus auratus (Golden hamster).